A 67-amino-acid polypeptide reads, in one-letter code: uncharacterized protein (67 aa).

A run of 2 helical transmembrane segments spans residues 10–32 (NLSHVLALFLVSFILMAPYTAFI) and 44–66 (ATLTGIVAGILSNPGLFAYMGQW).

The protein localises to the cell membrane. This is an uncharacterized protein from Archaeoglobus fulgidus (strain ATCC 49558 / DSM 4304 / JCM 9628 / NBRC 100126 / VC-16).